The chain runs to 149 residues: Deoxyuridine 5'-triphosphate nucleotidohydrolase (149 aa).

Substrate is bound by residues 68–70 (RSG), N81, 85–87 (LID), and M95.

It belongs to the dUTPase family. Mg(2+) serves as cofactor.

The catalysed reaction is dUTP + H2O = dUMP + diphosphate + H(+). It functions in the pathway pyrimidine metabolism; dUMP biosynthesis; dUMP from dCTP (dUTP route): step 2/2. This enzyme is involved in nucleotide metabolism: it produces dUMP, the immediate precursor of thymidine nucleotides and it decreases the intracellular concentration of dUTP so that uracil cannot be incorporated into DNA. In Polynucleobacter asymbioticus (strain DSM 18221 / CIP 109841 / QLW-P1DMWA-1) (Polynucleobacter necessarius subsp. asymbioticus), this protein is Deoxyuridine 5'-triphosphate nucleotidohydrolase.